The following is a 174-amino-acid chain: Cuticle protein 1 (174 aa).

The first 18 residues, 1–18 (MRFLIAFVAILGYASASA), serve as a signal peptide directing secretion.

The protein localises to the secreted. The chain is Cuticle protein 1 from Lonomia obliqua (Moth).